The following is a 140-amino-acid chain: Complex III assembly factor LYRM7 (140 aa).

Residues 93 to 140 (QYEFVNDQPPQRKKRGKIQIDDEQPTTCCGGGCGKPMPSNNSEKSTCS) are disordered. Over residues 130–140 (PSNNSEKSTCS) the composition is skewed to polar residues.

It belongs to the complex I LYR family. Interacts with UQCRFS1.

Its subcellular location is the mitochondrion matrix. In terms of biological role, assembly factor required for Rieske Fe-S protein UQCRFS1 incorporation into the cytochrome b-c1 (CIII) complex. Functions as a chaperone, binding to this subunit within the mitochondrial matrix and stabilizing it prior to its translocation and insertion into the late CIII dimeric intermediate within the mitochondrial inner membrane. The protein is Complex III assembly factor LYRM7 (lyrm7) of Dictyostelium discoideum (Social amoeba).